Here is a 381-residue protein sequence, read N- to C-terminus: Homoserine O-succinyltransferase (381 aa).

Residues 45–360 form the AB hydrolase-1 domain; it reads NAVLVCHALN…PHGHDAFLLD (316 aa). Serine 151 serves as the catalytic Nucleophile. Arginine 221 serves as a coordination point for substrate. Residues aspartate 321 and histidine 354 contribute to the active site. Residue aspartate 355 coordinates substrate.

Belongs to the AB hydrolase superfamily. MetX family. As to quaternary structure, homodimer.

Its subcellular location is the cytoplasm. It carries out the reaction L-homoserine + succinyl-CoA = O-succinyl-L-homoserine + CoA. It participates in amino-acid biosynthesis; L-methionine biosynthesis via de novo pathway; O-succinyl-L-homoserine from L-homoserine: step 1/1. Functionally, transfers a succinyl group from succinyl-CoA to L-homoserine, forming succinyl-L-homoserine. The chain is Homoserine O-succinyltransferase from Paraburkholderia phymatum (strain DSM 17167 / CIP 108236 / LMG 21445 / STM815) (Burkholderia phymatum).